A 324-amino-acid polypeptide reads, in one-letter code: 7,8-didemethyl-8-hydroxy-5-deazariboflavin synthase (324 aa).

One can recognise a Radical SAM core domain in the interval 4-239; sequence VTYSKNVFIP…QEVAIQIPPN (236 aa). Residues C18, C22, and C25 each coordinate [4Fe-4S] cluster.

The protein belongs to the radical SAM superfamily. CofG family. Consists of two subunits, CofG and CofH. Requires [4Fe-4S] cluster as cofactor.

It carries out the reaction 5-amino-5-(4-hydroxybenzyl)-6-(D-ribitylimino)-5,6-dihydrouracil + S-adenosyl-L-methionine = 7,8-didemethyl-8-hydroxy-5-deazariboflavin + 5'-deoxyadenosine + L-methionine + NH4(+) + H(+). It functions in the pathway cofactor biosynthesis; coenzyme F0 biosynthesis. Its function is as follows. Catalyzes the radical-mediated synthesis of 7,8-didemethyl-8-hydroxy-5-deazariboflavin from 5-amino-5-(4-hydroxybenzyl)-6-(D-ribitylimino)-5,6-dihydrouracil. The protein is 7,8-didemethyl-8-hydroxy-5-deazariboflavin synthase of Archaeoglobus fulgidus (strain ATCC 49558 / DSM 4304 / JCM 9628 / NBRC 100126 / VC-16).